Consider the following 499-residue polypeptide: Guanosine-5'-triphosphate,3'-diphosphate pyrophosphatase (499 aa).

The protein belongs to the GppA/Ppx family. GppA subfamily.

It carries out the reaction guanosine 3'-diphosphate 5'-triphosphate + H2O = guanosine 3',5'-bis(diphosphate) + phosphate + H(+). It functions in the pathway purine metabolism; ppGpp biosynthesis; ppGpp from GTP: step 2/2. Its function is as follows. Catalyzes the conversion of pppGpp to ppGpp. Guanosine pentaphosphate (pppGpp) is a cytoplasmic signaling molecule which together with ppGpp controls the 'stringent response', an adaptive process that allows bacteria to respond to amino acid starvation, resulting in the coordinated regulation of numerous cellular activities. The protein is Guanosine-5'-triphosphate,3'-diphosphate pyrophosphatase of Sodalis glossinidius (strain morsitans).